We begin with the raw amino-acid sequence, 643 residues long: Manganese lipoxygenase (643 aa).

The Lipoxygenase domain maps to 166-643 (WYTDEVFAQQ…PEQLANAIVI (478 aa)). The Mn(2+) site is built by histidine 325, histidine 330, histidine 510, asparagine 514, and isoleucine 643.

This sequence belongs to the lipoxygenase family. Requires Mn(2+) as cofactor.

The catalysed reaction is (9Z,12Z)-octadecadienoate + O2 = (13S)-hydroperoxy-(9Z,11E)-octadecadienoate. Functionally, lipoxygenase that metabolizes linoleic and alpha-linolenic acids to 13S-hydroperoxy fatty acids. The polypeptide is Manganese lipoxygenase (Pleurotus sapidus (Oyster mushroom)).